The following is a 236-amino-acid chain: Orotidine 5'-phosphate decarboxylase (236 aa).

Substrate-binding positions include Asp16, Lys38, 65 to 74, Thr123, Arg184, Gln193, Gly213, and Arg214; that span reads DLKLHDIGNT. Lys67 (proton donor) is an active-site residue.

The protein belongs to the OMP decarboxylase family. Type 1 subfamily. As to quaternary structure, homodimer.

It catalyses the reaction orotidine 5'-phosphate + H(+) = UMP + CO2. The protein operates within pyrimidine metabolism; UMP biosynthesis via de novo pathway; UMP from orotate: step 2/2. Its function is as follows. Catalyzes the decarboxylation of orotidine 5'-monophosphate (OMP) to uridine 5'-monophosphate (UMP). The sequence is that of Orotidine 5'-phosphate decarboxylase from Methylobacterium nodulans (strain LMG 21967 / CNCM I-2342 / ORS 2060).